The sequence spans 1597 residues: Pentafunctional AROM polypeptide (1597 aa).

Residues 1 to 384 are 3-dehydroquinate synthase; the sequence is MGVPTKISIL…HEPRASTVSN (384 aa). NAD(+)-binding positions include 44–46, 81–84, 114–116, and Asp119; these read DTN, ESSK, and GGV. Residue Arg130 participates in 7-phospho-2-dehydro-3-deoxy-D-arabino-heptonate binding. 139–140 is an NAD(+) binding site; the sequence is TT. 2 residues coordinate 7-phospho-2-dehydro-3-deoxy-D-arabino-heptonate: Asp146 and Lys152. Lys161 serves as a coordination point for NAD(+). Residue Asn162 coordinates 7-phospho-2-dehydro-3-deoxy-D-arabino-heptonate. Residues 179–182 and Asn190 contribute to the NAD(+) site; that span reads FLNT. Position 194 (Glu194) interacts with Zn(2+). 7-phospho-2-dehydro-3-deoxy-D-arabino-heptonate-binding positions include 194-197 and Lys250; that span reads EVIK. Glu260 acts as the Proton acceptor; for 3-dehydroquinate synthase activity in catalysis. Residues 264 to 268 and His271 contribute to the 7-phospho-2-dehydro-3-deoxy-D-arabino-heptonate site; that span reads RNLLN. His271 contributes to the Zn(2+) binding site. Residue His275 is the Proton acceptor; for 3-dehydroquinate synthase activity of the active site. Residues His287 and Lys356 each coordinate 7-phospho-2-dehydro-3-deoxy-D-arabino-heptonate. Residue His287 coordinates Zn(2+). The tract at residues 397–842 is EPSP synthase; that stretch reads VSPGVPKNLN…WDSLAQTFKV (446 aa). Residue Cys824 is the For EPSP synthase activity of the active site. The tract at residues 866 to 1057 is shikimate kinase; it reads ASIFIIGMRG…RSKENTFFVS (192 aa). 872–879 contributes to the ATP binding site; sequence GMRGAGKT. Positions 1058–1278 are 3-dehydroquinase; it reads LTLPDLAPAA…AAPGQLSARE (221 aa). His1181 acts as the Proton acceptor; for 3-dehydroquinate dehydratase activity in catalysis. Catalysis depends on Lys1209, which acts as the Schiff-base intermediate with substrate; for 3-dehydroquinate dehydratase activity. Residues 1291 to 1597 form a shikimate dehydrogenase region; sequence SKKFAVIGNP…VQPKDDDIST (307 aa).

The protein in the N-terminal section; belongs to the sugar phosphate cyclases superfamily. Dehydroquinate synthase family. In the 2nd section; belongs to the EPSP synthase family. This sequence in the 3rd section; belongs to the shikimate kinase family. It in the 4th section; belongs to the type-I 3-dehydroquinase family. The protein in the C-terminal section; belongs to the shikimate dehydrogenase family. As to quaternary structure, homodimer. It depends on Zn(2+) as a cofactor.

Its subcellular location is the cytoplasm. The enzyme catalyses 7-phospho-2-dehydro-3-deoxy-D-arabino-heptonate = 3-dehydroquinate + phosphate. It catalyses the reaction 3-dehydroquinate = 3-dehydroshikimate + H2O. It carries out the reaction shikimate + NADP(+) = 3-dehydroshikimate + NADPH + H(+). The catalysed reaction is shikimate + ATP = 3-phosphoshikimate + ADP + H(+). The enzyme catalyses 3-phosphoshikimate + phosphoenolpyruvate = 5-O-(1-carboxyvinyl)-3-phosphoshikimate + phosphate. It functions in the pathway metabolic intermediate biosynthesis; chorismate biosynthesis; chorismate from D-erythrose 4-phosphate and phosphoenolpyruvate: step 2/7. It participates in metabolic intermediate biosynthesis; chorismate biosynthesis; chorismate from D-erythrose 4-phosphate and phosphoenolpyruvate: step 3/7. The protein operates within metabolic intermediate biosynthesis; chorismate biosynthesis; chorismate from D-erythrose 4-phosphate and phosphoenolpyruvate: step 4/7. Its pathway is metabolic intermediate biosynthesis; chorismate biosynthesis; chorismate from D-erythrose 4-phosphate and phosphoenolpyruvate: step 5/7. It functions in the pathway metabolic intermediate biosynthesis; chorismate biosynthesis; chorismate from D-erythrose 4-phosphate and phosphoenolpyruvate: step 6/7. The AROM polypeptide catalyzes 5 consecutive enzymatic reactions in prechorismate polyaromatic amino acid biosynthesis. The chain is Pentafunctional AROM polypeptide from Blastomyces gilchristii (strain SLH14081) (Blastomyces dermatitidis).